Consider the following 255-residue polypeptide: Methylthioribulose-1-phosphate dehydratase (255 aa).

Cys-111 serves as a coordination point for substrate. Residues His-128 and His-130 each coordinate Zn(2+). Glu-157 functions as the Proton donor/acceptor in the catalytic mechanism. His-213 contacts Zn(2+).

This sequence belongs to the aldolase class II family. MtnB subfamily. Zn(2+) is required as a cofactor.

Its subcellular location is the cytoplasm. It carries out the reaction 5-(methylsulfanyl)-D-ribulose 1-phosphate = 5-methylsulfanyl-2,3-dioxopentyl phosphate + H2O. It participates in amino-acid biosynthesis; L-methionine biosynthesis via salvage pathway; L-methionine from S-methyl-5-thio-alpha-D-ribose 1-phosphate: step 2/6. Its function is as follows. Catalyzes the dehydration of methylthioribulose-1-phosphate (MTRu-1-P) into 2,3-diketo-5-methylthiopentyl-1-phosphate (DK-MTP-1-P). The chain is Methylthioribulose-1-phosphate dehydratase from Talaromyces stipitatus (strain ATCC 10500 / CBS 375.48 / QM 6759 / NRRL 1006) (Penicillium stipitatum).